Reading from the N-terminus, the 358-residue chain is MVRSMRSRVAARAVAWALAVMPLAGAAGLTMAASPAAVAADTYAATRYPVILVHGLAGTDKFANVVDYWYGIQSDLQSHGAKVYVANLSGFQSDDGPNGRGEQLLAYVKQVLAATGATKVNLIGHSQGGLTSRYVAAVAPQLVASVTTIGTPHRGSEFADFVQDVLKTDPTGLSSTVIAAFVNVFGTLVSSSHNTDQDALAALRTLTTAQTATYNRNFPSAGLGAPGSCQTGAATETVGGSQHLLYSWGGTAIQPTSTVLGVTGATDTSTGTLDVANVTDPSTLALLATGAVMINRASGQNDGLVSRCSSLFGQVISTSYHWNHLDEINQLLGVRGANAEDPVAVIRTHVNRLKLQGV.

The signal sequence occupies residues 1 to 39 (MVRSMRSRVAARAVAWALAVMPLAGAAGLTMAASPAAVA). Positions 48 to 327 (YPVILVHGLA…TSYHWNHLDE (280 aa)) constitute an AB hydrolase-1 domain. L56 provides a ligand contact to substrate. The active-site Nucleophile is the S126. Q127 lines the substrate pocket. A disulfide bridge links C229 with C308. D280 contributes to the Ca(2+) binding site. Residues D302 and H324 each act as charge relay system in the active site. Residues D326, Q330, and V334 each coordinate Ca(2+).

It belongs to the AB hydrolase superfamily. Pseudomonas lipase family. In terms of assembly, monomer. Interacts with lipase-specific foldase Lif. The cofactor is Ca(2+).

Its subcellular location is the secreted. The enzyme catalyses a triacylglycerol + H2O = a diacylglycerol + a fatty acid + H(+). Catalyzes the hydrolysis of triacylglycerol. The polypeptide is Triacylglycerol lipase (Burkholderia plantarii).